Reading from the N-terminus, the 81-residue chain is Metallocarboxypeptidase inhibitor (81 aa).

The N-terminal stretch at 1–15 is a signal peptide; it reads MFLLVFLCCLHLVIS. 4 disulfide bridges follow: cysteine 25-cysteine 48, cysteine 32-cysteine 76, cysteine 33-cysteine 57, and cysteine 36-cysteine 72.

Functionally, tightly binding, competitive inhibitor of different types of pancreatic-like carboxypeptidases. Inhibits human CPA4. In Hirudo medicinalis (Medicinal leech), this protein is Metallocarboxypeptidase inhibitor.